The following is a 572-amino-acid chain: Proline--tRNA ligase (572 aa).

It belongs to the class-II aminoacyl-tRNA synthetase family. ProS type 1 subfamily. In terms of assembly, homodimer.

The protein localises to the cytoplasm. The enzyme catalyses tRNA(Pro) + L-proline + ATP = L-prolyl-tRNA(Pro) + AMP + diphosphate. Its function is as follows. Catalyzes the attachment of proline to tRNA(Pro) in a two-step reaction: proline is first activated by ATP to form Pro-AMP and then transferred to the acceptor end of tRNA(Pro). As ProRS can inadvertently accommodate and process non-cognate amino acids such as alanine and cysteine, to avoid such errors it has two additional distinct editing activities against alanine. One activity is designated as 'pretransfer' editing and involves the tRNA(Pro)-independent hydrolysis of activated Ala-AMP. The other activity is designated 'posttransfer' editing and involves deacylation of mischarged Ala-tRNA(Pro). The misacylated Cys-tRNA(Pro) is not edited by ProRS. The sequence is that of Proline--tRNA ligase from Buchnera aphidicola subsp. Acyrthosiphon pisum (strain APS) (Acyrthosiphon pisum symbiotic bacterium).